Consider the following 132-residue polypeptide: Small ribosomal subunit protein uS8 (132 aa).

This sequence belongs to the universal ribosomal protein uS8 family. As to quaternary structure, part of the 30S ribosomal subunit. Contacts proteins S5 and S12.

In terms of biological role, one of the primary rRNA binding proteins, it binds directly to 16S rRNA central domain where it helps coordinate assembly of the platform of the 30S subunit. The polypeptide is Small ribosomal subunit protein uS8 (Mycolicibacterium smegmatis (strain ATCC 700084 / mc(2)155) (Mycobacterium smegmatis)).